Consider the following 337-residue polypeptide: Major envelope glycoprotein (337 aa).

Asparagine 76, asparagine 114, asparagine 271, and asparagine 301 each carry an N-linked (GlcNAc...) asparagine; by host glycan.

This sequence belongs to the baculoviridae gp64 family. Palmitoylated.

The protein resides in the virion membrane. Its subcellular location is the host cell membrane. Functionally, envelope phosphoglycoprotein which mediates the fusion of viral and host endosomal membranes leading to virus entry into the host cell. In Lepidoptera (butterflies and moths), this protein is Major envelope glycoprotein (GP67).